Consider the following 93-residue polypeptide: UPF0147 protein MJ1419 (93 aa).

Belongs to the UPF0147 family.

In Methanocaldococcus jannaschii (strain ATCC 43067 / DSM 2661 / JAL-1 / JCM 10045 / NBRC 100440) (Methanococcus jannaschii), this protein is UPF0147 protein MJ1419.